Consider the following 521-residue polypeptide: Glucomannan 4-beta-mannosyltransferase 1 (521 aa).

Residues 22–42 (VIVPLLRLAVAVCLTMSVLLF) traverse the membrane as a helical segment. Residue Asp-123 is part of the active site. The substrate site is built by Asp-182 and Asp-184. Residue Asp-276 is part of the active site. A run of 4 helical transmembrane segments spans residues 355-375 (IIAH…TIFV), 391-411 (IITL…FFWI), 471-491 (VTEL…LAFG), and 495-515 (FFIY…GYVG).

Belongs to the glycosyltransferase 2 family. Plant cellulose synthase-like A subfamily.

The protein resides in the golgi apparatus membrane. The catalysed reaction is GDP-mannose + (glucomannan)n = GDP + (glucomannan)n+1.. In terms of biological role, possesses glucomannan synthase and mannan synthase activities in vitro. Mannan synthase consists of a 4-beta-mannosyltransferase activity on mannan using GDP-mannose. The beta-1,4-mannan product is the backbone for galactomannan synthesis by galactomannan galactosyltransferase. Galactomannan is a noncellulosic polysaccharides of plant cell wall. The sequence is that of Glucomannan 4-beta-mannosyltransferase 1 from Oryza sativa subsp. japonica (Rice).